The chain runs to 83 residues: Small ribosomal subunit protein bS16 (83 aa).

The protein belongs to the bacterial ribosomal protein bS16 family.

In Cupriavidus taiwanensis (strain DSM 17343 / BCRC 17206 / CCUG 44338 / CIP 107171 / LMG 19424 / R1) (Ralstonia taiwanensis (strain LMG 19424)), this protein is Small ribosomal subunit protein bS16.